Reading from the N-terminus, the 300-residue chain is Ribosomal protein L11 methyltransferase (300 aa).

S-adenosyl-L-methionine-binding residues include Thr152, Gly173, Asp195, and Asn234.

This sequence belongs to the methyltransferase superfamily. PrmA family.

It is found in the cytoplasm. The enzyme catalyses L-lysyl-[protein] + 3 S-adenosyl-L-methionine = N(6),N(6),N(6)-trimethyl-L-lysyl-[protein] + 3 S-adenosyl-L-homocysteine + 3 H(+). Methylates ribosomal protein L11. This chain is Ribosomal protein L11 methyltransferase, found in Burkholderia cenocepacia (strain ATCC BAA-245 / DSM 16553 / LMG 16656 / NCTC 13227 / J2315 / CF5610) (Burkholderia cepacia (strain J2315)).